The chain runs to 729 residues: Serine/threonine-protein kinase TBK1 (729 aa).

One can recognise a Protein kinase domain in the interval 9–310; that stretch reads WLLSDILGQG…ETSDVLHRMV (302 aa). 15 to 23 is an ATP binding site; sequence LGQGATANV. Residue Lys30 forms a Glycyl lysine isopeptide (Lys-Gly) (interchain with G-Cter in ubiquitin) linkage. Lys38 lines the ATP pocket. The active-site Proton acceptor is the Asp135. At Ser172 the chain carries Phosphoserine; by autocatalysis and IKKB. Residues 309–385 enclose the Ubiquitin-like domain; the sequence is MVIHVFSLQH…ENPIFVTSRE (77 aa). Lys401 participates in a covalent cross-link: Glycyl lysine isopeptide (Lys-Gly) (interchain with G-Cter in ubiquitin). Coiled coils occupy residues 407–657 and 658–713; these read DLDG…LQET and LPQK…ILER. The interval 621 to 729 is interaction with AZI2, TANK and TBKBP1; sequence RKMLHLRKQL…DGGLRNVDCL (109 aa). Residue Lys670 forms a Glycyl lysine isopeptide (Lys-Gly) (interchain with G-Cter in ubiquitin) linkage. Position 716 is a phosphoserine (Ser716).

Belongs to the protein kinase superfamily. Ser/Thr protein kinase family. I-kappa-B kinase subfamily. In terms of assembly, homodimer. Interacts with DDX3X, TIRAP and TRAF2. Part of a ternary complex consisting of TANK, TRAF2 and TBK1. Interacts with AZI2, TANK and TBKBP1; these interactions are mutually exclusive and mediate TBK1 activation. Interacts with GSK3B; this interaction promotes TBK1 self-association and autophosphorylation. Interacts with SIKE1; SIKE1 is associated with TBK1 under physiological condition and dissociated from TBK1 upon viral infection or TLR3 stimulation. Interacts with IRF3, leading to IRF3 phosphorylation. Interacts with RIGI. Interacts with CYLD. Interacts with OPTN and TRAF3. Interacts with SRC. Interacts with the exocyst complex subunit SEC5/EXOC2; this interaction is sufficient to trigger TBK1 activity. Interacts with STING1, leading to STING1 phosphorylation. Interacts with IFIT3 (via N-terminus). Interacts with MAVS; interaction only takes place in the presence of IFIT3 and leads to MAVS phosphorylation. Interacts (via protein kinase domain) with TTLL12 (via TTL domain); the interaction prevents MAVS binding to TBK1. Interacts with TICAM1; this interaction is enhanced in the presence of WDFY1 and leads to TICAM1 phosphorylation. Interacts with TRIM26. Interacts with TRIM23. Interacts with TTC4 and IKBKE. Interacts with HNRNPA2B1. Interacts with DDX3X. Interacts with TRIM14. Interacts with CEP170; efficient complex formation may be dependent on the presence of CCDC61. Interacts with TRAF3IP3. Interacts with HSP90AA1; the interaction mediates TBK1 association with TOMM70. Interacts with TAX1BP1. Interacts with kinase IKBKB; the complex interacts with STAT1, leading to phosphorylation of STAT1 on 'Thr-748' by IKBKB. Interacts with ICOS; this interaction is critical for the maturation of T follicular regulatory cells. Interacts with RNF144B; this interaction prevents TBK1 phosphorylation and subsequent activation. Interacts with ASB8; this interaction promotes TBK1 proteasomal degradation. Autophosphorylation at Ser-172 activates the kinase, and is an essential step for virus-triggered signaling. Phosphorylated by IKBKB/IKKB at Ser-172. Phosphorylation requires homodimerization and ubiquitination at Lys-30 and Lys-401. Dephosphorylated at Ser-172 by PPM1B and this negatively regulates its role in mediating antiviral response. In terms of processing, 'Lys-63'-linked polyubiquitination by MIB1 after RNA virus infection, or by NRDP1 after LPS stimulation at Lys-30 and Lys-401, participates in kinase activation. 'Lys-48'-linked polyubiquitination at Lys-670 by DTX4 leads to proteasomal degradation. 'Lys-48'-linked polyubiquitination by TRAIP also leads to proteasomal degradation. 'Lys-48'-linked polyubiquitination by TRAF7; leading to proteasomal degradation. 'Lys-63'-linked polyubiquitination by RNF128 at Lys-30 and Lys-401 leads to the activation of antiviral responses. 'Lys-48'-linked polyubiquitination after 'lys-33'-linked deubiquitination by USP38 promotes TBK1 degradation.

The protein resides in the cytoplasm. The catalysed reaction is L-seryl-[protein] + ATP = O-phospho-L-seryl-[protein] + ADP + H(+). It catalyses the reaction L-threonyl-[protein] + ATP = O-phospho-L-threonyl-[protein] + ADP + H(+). With respect to regulation, kinase activity is inhibited competitively by amlexanox. Functionally, serine/threonine kinase that plays an essential role in regulating inflammatory responses to foreign agents. Following activation of toll-like receptors by viral or bacterial components, associates with TRAF3 and TANK and phosphorylates interferon regulatory factors (IRFs) IRF3 and IRF7 as well as DDX3X. This activity allows subsequent homodimerization and nuclear translocation of the IRFs leading to transcriptional activation of pro-inflammatory and antiviral genes including IFNA and IFNB. In order to establish such an antiviral state, TBK1 form several different complexes whose composition depends on the type of cell and cellular stimuli. Thus, several scaffolding molecules including FADD, TRADD, MAVS, AZI2, TANK or TBKBP1/SINTBAD can be recruited to the TBK1-containing-complexes. Plays a key role in IRF3 activation: acts by first phosphorylating innate adapter proteins MAVS, STING1 and TICAM1 on their pLxIS motif, leading to recruitment of IRF3, thereby licensing IRF3 for phosphorylation by TBK1. Under particular conditions, functions as a NF-kappa-B effector by phosphorylating NF-kappa-B inhibitor alpha/NFKBIA, IKBKB or RELA to translocate NF-Kappa-B to the nucleus. Restricts bacterial proliferation by phosphorylating the autophagy receptor OPTN/Optineurin on 'Ser-177', thus enhancing LC3 binding affinity and antibacterial autophagy. Phosphorylates SMCR8 component of the C9orf72-SMCR8 complex, promoting autophagosome maturation. Phosphorylates ATG8 proteins MAP1LC3C and GABARAPL2, thereby preventing their delipidation and premature removal from nascent autophagosomes. Seems to play a role in energy balance regulation by sustaining a state of chronic, low-grade inflammation in obesity, which leads to a negative impact on insulin sensitivity. Acts both as a positive and negative regulator of the mTORC1 complex, depending on the context: activates mTORC1 in response to growth factors by catalyzing phosphorylation of MTOR, while it limits the mTORC1 complex by promoting phosphorylation of RPTOR. Acts as a positive regulator of the mTORC2 complex by mediating phosphorylation of MTOR, leading to increased phosphorylation and activation of AKT1. Phosphorylates and activates AKT1. Involved in the regulation of TNF-induced RIPK1-mediated cell death, probably acting via CYLD phosphorylation that in turn controls RIPK1 ubiquitination status. Also participates in the differentiation of T follicular regulatory cells together with the receptor ICOS. The chain is Serine/threonine-protein kinase TBK1 from Mus musculus (Mouse).